We begin with the raw amino-acid sequence, 697 residues long: MAPWPELENAQPNPGKFIEGASGPQSSIPAKDKEASKTNDNGTPVAKTELLPSYSALVLIEEHPEGTDPWDLPELQDTGIKWSERDTKGKTLCIFQGVGKFILLLGFLYLFVCSLDVLSSAFQLVGGKVAGQFFSNNSIMSNPVAGLVIGVLVTVMVQSSSTSSSIIVSMVASSLLTVRAAIPIIMGANIGTSITNTIVALMQAGDRNEFRRAFAGATVHDFFNWLSVFVLLPLEAATHYLEILTNLVLETFKFQNGEDAPDILKVITDPFTKLIIQLDKKVIQQIAMGDSAAQNKSLIKIWCKSITNVTEMNVTVPSTDNCTSPSYCWTDGIQTWTIQNVTQKENIAKCQHIFVNFSLPDLAVGIILLTVSLVVLCGCLIMIVKLLGSVLRGQVATVIKKTLNTDFPFPFAWLTGYLAILVGAGMTFIVQSSSVFTSAMTPLIGIGVISIERAYPLTLGSNIGTTTTAILAALASPGNTLRSSLQIALCHFFFNISGILLWYPIPFTRLPIRLAKGLGNISAKYRWFAVFYLIFFFFVTPLTVFGLSLAGWPVLVGVGVPIILLLLLVLCLRMLQFRCPRILPLKLRDWNFLPLWMHSLKPWDNVISLATTCFQRRCCCCCRVCCRVCCMVCGCKCCRCSKCCRDQGEEEEEKEQDIPVKASGAFDNAAMSKECQDEGKGQVEVLSMKALSNTTVF.

The interval 1–45 (MAPWPELENAQPNPGKFIEGASGPQSSIPAKDKEASKTNDNGTPV) is disordered. At 1–91 (MAPWPELENA…WSERDTKGKT (91 aa)) the chain is on the cytoplasmic side. A helical transmembrane segment spans residues 92–112 (LCIFQGVGKFILLLGFLYLFV). At 113–136 (CSLDVLSSAFQLVGGKVAGQFFSN) the chain is on the extracellular side. The helical transmembrane segment at 137–157 (NSIMSNPVAGLVIGVLVTVMV) threads the bilayer. Over 158–213 (QSSSTSSSIIVSMVASSLLTVRAAIPIIMGANIGTSITNTIVALMQAGDRNEFRRA) the chain is Cytoplasmic. The helical transmembrane segment at 214–234 (FAGATVHDFFNWLSVFVLLPL) threads the bilayer. Residues 235–363 (EAATHYLEIL…FVNFSLPDLA (129 aa)) are Extracellular-facing. N295, N308, N321, and N356 each carry an N-linked (GlcNAc...) asparagine glycan. A disulfide bridge links C303 with C350. A helical transmembrane segment spans residues 364 to 384 (VGIILLTVSLVVLCGCLIMIV). At 385–408 (KLLGSVLRGQVATVIKKTLNTDFP) the chain is on the cytoplasmic side. Residues 409–429 (FPFAWLTGYLAILVGAGMTFI) traverse the membrane as a helical segment. Topologically, residues 430–486 (VQSSSVFTSAMTPLIGIGVISIERAYPLTLGSNIGTTTTAILAALASPGNTLRSSLQ) are extracellular. A helical membrane pass occupies residues 487–507 (IALCHFFFNISGILLWYPIPF). The Cytoplasmic segment spans residues 508–526 (TRLPIRLAKGLGNISAKYR). The chain crosses the membrane as a helical span at residues 527–547 (WFAVFYLIFFFFVTPLTVFGL). The Extracellular segment spans residues 548 to 551 (SLAG). A helical membrane pass occupies residues 552–572 (WPVLVGVGVPIILLLLLVLCL). The Cytoplasmic portion of the chain corresponds to 573–696 (RMLQFRCPRI…SMKALSNTTV (124 aa)).

Belongs to the SLC34A transporter family. As to expression, highly abundant in the ileum of small intestine, whereas it is almost absent in the duodenum and in the jejunum.

It is found in the apical cell membrane. The catalysed reaction is 3 Na(+)(out) + phosphate(out) = 3 Na(+)(in) + phosphate(in). Its function is as follows. Involved in actively transporting phosphate into cells via Na(+) cotransport. The chain is Sodium-dependent phosphate transport protein 2B (Slc34a2) from Mus musculus (Mouse).